Consider the following 555-residue polypeptide: Potassium-transporting ATPase potassium-binding subunit (555 aa).

10 helical membrane passes run 2–22 (IWVA…PTGI), 60–80 (QYAL…YFIF), 130–150 (IGIT…VMAF), 173–193 (VFLP…VPQT), 246–266 (MSNI…PFTY), 278–298 (ILFV…TTSE), 374–394 (AGFV…GLMV), 412–432 (LIAV…ALAL), 483–503 (LVMF…AASL), and 525–545 (GIFI…MLVL).

This sequence belongs to the KdpA family. In terms of assembly, the system is composed of three essential subunits: KdpA, KdpB and KdpC.

It is found in the cell membrane. Part of the high-affinity ATP-driven potassium transport (or Kdp) system, which catalyzes the hydrolysis of ATP coupled with the electrogenic transport of potassium into the cytoplasm. This subunit binds the extracellular potassium ions and delivers the ions to the membrane domain of KdpB through an intramembrane tunnel. The sequence is that of Potassium-transporting ATPase potassium-binding subunit from Bacillus cereus (strain AH187).